A 197-amino-acid chain; its full sequence is MADMGIQPSVFDRLLKDRIIWLGSEVRDENANEIAAKLLLLAAEDSKRDIYLYINSPGGSITAGMAIYDTMQFVPNDIVTVGIGMAASMGQLLLTAGTKGKRYITPNARVLLHQPHGGFGGTASDIRTQAQLILHMKKRLAEITSEATGKTVDQVNADGDRDRWFTAQEALDYGFVDHIRESALLVAGGGGTAPAGK.

Residue Ser88 is the Nucleophile of the active site. Residue His113 is part of the active site.

The protein belongs to the peptidase S14 family. In terms of assembly, fourteen ClpP subunits assemble into 2 heptameric rings which stack back to back to give a disk-like structure with a central cavity, resembling the structure of eukaryotic proteasomes.

The protein localises to the cytoplasm. The catalysed reaction is Hydrolysis of proteins to small peptides in the presence of ATP and magnesium. alpha-casein is the usual test substrate. In the absence of ATP, only oligopeptides shorter than five residues are hydrolyzed (such as succinyl-Leu-Tyr-|-NHMec, and Leu-Tyr-Leu-|-Tyr-Trp, in which cleavage of the -Tyr-|-Leu- and -Tyr-|-Trp bonds also occurs).. Cleaves peptides in various proteins in a process that requires ATP hydrolysis. Has a chymotrypsin-like activity. Plays a major role in the degradation of misfolded proteins. This is ATP-dependent Clp protease proteolytic subunit 1 from Leifsonia xyli subsp. xyli (strain CTCB07).